Consider the following 56-residue polypeptide: Small ribosomal subunit protein uS14 (56 aa).

Cysteine 21, cysteine 24, cysteine 39, and cysteine 42 together coordinate Zn(2+).

The protein belongs to the universal ribosomal protein uS14 family. The cofactor is Zn(2+).

This Griffithsia japonica (Red alga) protein is Small ribosomal subunit protein uS14 (RPS29).